Reading from the N-terminus, the 308-residue chain is Putative glutamine amidotransferase Rv2859c (308 aa).

Residues 1-62 (MDLSASRSDG…ASPRLRSPLG (62 aa)) are disordered. Low complexity-rich tracts occupy residues 13–24 (PLRPASPRLRSP), 31–42 (PLRPASPRLRSP), and 49–61 (PLRP…RSPL). A Glutamine amidotransferase type-1 domain is found at 78 to 301 (RTGVWDIPAG…VDAASGYAGR (224 aa)). C177 functions as the Nucleophile in the catalytic mechanism. Catalysis depends on residues H277 and E279. An Isoglutamyl lysine isopeptide (Lys-Gln) (interchain with Q-Cter in protein Pup) cross-link involves residue K289.

The protein is Putative glutamine amidotransferase Rv2859c of Mycobacterium tuberculosis (strain ATCC 25618 / H37Rv).